Consider the following 293-residue polypeptide: RNA-binding Raly-like protein (293 aa).

The RRM domain maps to 21 to 92 (SRVFIGNLNT…QPLDINMAGE (72 aa)). Disordered regions lie at residues 159–195 (PRAAVTTTRRGKGVFSMKGGSRSAVSGSSSSGSKLKS) and 245–293 (QDEC…LQIK). Positions 176–192 (KGGSRSAVSGSSSSGSK) are enriched in low complexity. A coiled-coil region spans residues 192–254 (KLKSDELQTI…QDECVSENAD (63 aa)). A compositionally biased stretch (acidic residues) spans 259 to 284 (EPAEGAPDADGEELTDGVEEDFDEDG).

It belongs to the RRM HNRPC family. RALY subfamily.

This chain is RNA-binding Raly-like protein (RALYL), found in Bos taurus (Bovine).